Here is a 317-residue protein sequence, read N- to C-terminus: Tyrosine--tRNA ligase (317 aa).

L-tyrosine is bound at residue Tyr-33. Residues 38–46 (PSGKIHMGH) carry the 'HIGH' region motif. The L-tyrosine site is built by Tyr-155, Gln-159, Asp-162, and Gln-177. The 'KMSKS' region motif lies at 211-215 (KMASS). Position 214 (Ser-214) interacts with ATP.

This sequence belongs to the class-I aminoacyl-tRNA synthetase family. TyrS type 3 subfamily. Homodimer.

The protein resides in the cytoplasm. The catalysed reaction is tRNA(Tyr) + L-tyrosine + ATP = L-tyrosyl-tRNA(Tyr) + AMP + diphosphate + H(+). Catalyzes the attachment of tyrosine to tRNA(Tyr) in a two-step reaction: tyrosine is first activated by ATP to form Tyr-AMP and then transferred to the acceptor end of tRNA(Tyr). The chain is Tyrosine--tRNA ligase from Methanosarcina barkeri (strain Fusaro / DSM 804).